We begin with the raw amino-acid sequence, 461 residues long: Nuclear distribution protein PAC1 (461 aa).

Residues 9–41 enclose the LisH domain; that stretch reads QAEELHKSIIAYLTANNLLNTANTLRAELNLSE. 7 WD repeats span residues 114–155, 157–197, 201–248, 251–290, 312–355, 357–396, and 401–457; these read SHRD…RTIK, HTRA…KNIR, GHDH…CVRT, GHTA…PESK, QYLS…LMTL, GHDN…KCIK, and AHER…MKLR.

This sequence belongs to the WD repeat LIS1/nudF family. In terms of assembly, self-associates. Interacts with NDL1 and dynein.

It localises to the cytoplasm. It is found in the cytoskeleton. The protein resides in the spindle pole. Positively regulates the activity of the minus-end directed microtubule motor protein dynein. May enhance dynein-mediated microtubule sliding by targeting dynein to the microtubule plus end. Required for nuclear migration during vegetative growth as well as development. Required for retrograde early endosome (EE) transport from the hyphal tip. Required for localization of dynein to the mitotic spindle poles. Recruits additional proteins to the dynein complex at SPBs. In Arthroderma otae (strain ATCC MYA-4605 / CBS 113480) (Microsporum canis), this protein is Nuclear distribution protein PAC1.